A 425-amino-acid chain; its full sequence is Isocitrate dehydrogenase [NADP] (425 aa).

Threonine 114 contributes to the NADP(+) binding site. Residues serine 123, asparagine 125, arginine 129, arginine 139, and arginine 162 each coordinate D-threo-isocitrate. Aspartate 316 provides a ligand contact to Mg(2+). NADP(+) is bound by residues 348–354 (HGTAPKY), asparagine 361, tyrosine 400, and arginine 404.

This sequence belongs to the isocitrate and isopropylmalate dehydrogenases family. As to quaternary structure, homodimer. Mg(2+) is required as a cofactor. It depends on Mn(2+) as a cofactor.

The enzyme catalyses D-threo-isocitrate + NADP(+) = 2-oxoglutarate + CO2 + NADPH. Catalyzes the oxidative decarboxylation of isocitrate to 2-oxoglutarate and carbon dioxide with the concomitant reduction of NADP(+). This is Isocitrate dehydrogenase [NADP] (icd) from Helicobacter pylori (strain J99 / ATCC 700824) (Campylobacter pylori J99).